A 707-amino-acid chain; its full sequence is MNYSLFISCSKGLEYLLEDELKGLGLHVTQVSPQGVYGEASLPVIYNLCLWSRLANRIQLILFSGHATKEQAVHQLCTDFHWQTVFTHDKTIAIEFHGASEQIRNTMFGAQIVKDGIVDHFRRLNGSRPSVDKEKPQILIHAHLKNDILTVSFDLVGYSLHQRGYRKKAGKAPLKENVAAAMLLRAKWPELAAQGYSLHDPFCGSGTLVIEAAMMAAHIAPGLLRQDQSLQYWARHQSSLWEKLRTQALQQVKPLAVKLIGTDADSKIITLARSNAERAGVLPLVEFNTLSLNACRPGTKRGLVVCNPPYGERLGEVTQLVPLYQELGTTLHTCYQGWQAAILTSSPVLAKALGLRADKQYTLYNGPLECKLYCLTLSAANKLKNTPNAPLSDNAQMLFNRLEKNRNHLQKWARKNQITCYRIYDADLPEYAYAIDIYNDYAVLQEYAPPASIPVHKAEKRSLEMLQVVPRALGIHPEKLIVKQRKQQKGSEQYQKIGKTSQRLIVTEGKAKLIVNLYDYLDTGLFLDHRLMRLKFAQLEPGTRFLNCFCYTASASVHAALAGALTTNVDLSKTYLLWAEDNFRLNDINLSKHQFLQYDCKEWMKTTRDKFDVIFLDPPSFSNSKRMSDILDIQRDHVSLINMAMRLLNPDGVLYFSTNLRQFKLEPMLKEKYAVQDITPQTIDQDFKRNSKIHHCFKIVMPHFADN.

The THUMP domain maps to valine 44–leucine 155.

The protein belongs to the methyltransferase superfamily. RlmKL family.

Its subcellular location is the cytoplasm. It catalyses the reaction guanosine(2445) in 23S rRNA + S-adenosyl-L-methionine = N(2)-methylguanosine(2445) in 23S rRNA + S-adenosyl-L-homocysteine + H(+). The enzyme catalyses guanosine(2069) in 23S rRNA + S-adenosyl-L-methionine = N(2)-methylguanosine(2069) in 23S rRNA + S-adenosyl-L-homocysteine + H(+). In terms of biological role, specifically methylates the guanine in position 2445 (m2G2445) and the guanine in position 2069 (m7G2069) of 23S rRNA. This Legionella pneumophila subsp. pneumophila (strain Philadelphia 1 / ATCC 33152 / DSM 7513) protein is Ribosomal RNA large subunit methyltransferase K/L.